The following is a 245-amino-acid chain: Epoxyqueuosine reductase QueH (245 aa).

Positions 52, 53, 131, and 134 each coordinate [4Fe-4S] cluster. Cysteine 214 and cysteine 216 are oxidised to a cystine.

The protein belongs to the QueH family.

The catalysed reaction is epoxyqueuosine(34) in tRNA + AH2 = queuosine(34) in tRNA + A + H2O. It participates in tRNA modification; tRNA-queuosine biosynthesis. In terms of biological role, catalyzes the conversion of epoxyqueuosine (oQ) to queuosine (Q), which is a hypermodified base found in the wobble positions of tRNA(Asp), tRNA(Asn), tRNA(His) and tRNA(Tyr). This Haemophilus influenzae (strain ATCC 51907 / DSM 11121 / KW20 / Rd) protein is Epoxyqueuosine reductase QueH.